The following is a 501-amino-acid chain: Chromosomal replication initiator protein DnaA (501 aa).

The segment at Met1 to Pro90 is domain I, interacts with DnaA modulators. The domain II stretch occupies residues Asn91–Ser164. A compositionally biased stretch (low complexity) spans Ala103 to Lys121. Residues Ala103 to Glu150 form a disordered region. A compositionally biased stretch (basic and acidic residues) spans Asn122 to Phe134. Residues Tyr165–Ser381 are domain III, AAA+ region. Residues Gly209, Gly211, Lys212, and Thr213 each coordinate ATP. Positions His382–Thr501 are domain IV, binds dsDNA.

It belongs to the DnaA family. In terms of assembly, oligomerizes as a right-handed, spiral filament on DNA at oriC.

The protein localises to the cytoplasm. In terms of biological role, plays an essential role in the initiation and regulation of chromosomal replication. ATP-DnaA binds to the origin of replication (oriC) to initiate formation of the DNA replication initiation complex once per cell cycle. Binds the DnaA box (a 9 base pair repeat at the origin) and separates the double-stranded (ds)DNA. Forms a right-handed helical filament on oriC DNA; dsDNA binds to the exterior of the filament while single-stranded (ss)DNA is stabiized in the filament's interior. The ATP-DnaA-oriC complex binds and stabilizes one strand of the AT-rich DNA unwinding element (DUE), permitting loading of DNA polymerase. After initiation quickly degrades to an ADP-DnaA complex that is not apt for DNA replication. Binds acidic phospholipids. This chain is Chromosomal replication initiator protein DnaA, found in Pseudomonas fluorescens (strain SBW25).